The sequence spans 286 residues: Transcription factor MYB62 (286 aa).

HTH myb-type domains lie at 16–68 and 69–123; these read DEEL…LNYL and KPDI…QKQA. 2 consecutive DNA-binding regions (H-T-H motif) follow at residues 44–68 and 96–119; these read WNHV…LNYL and WSKI…RTRV.

In terms of tissue distribution, expressed in leaves and flowers.

Its subcellular location is the nucleus. Its function is as follows. Transcription repressor of phosphate (Pi) starvation-induced genes. Negatively regulates Pi starvation responses via the repression of gibberellic acid (GA) biosynthesis and signaling. Modulates root architecture, phosphatase activity, and Pi uptake and accumulation. The sequence is that of Transcription factor MYB62 from Arabidopsis thaliana (Mouse-ear cress).